A 371-amino-acid chain; its full sequence is Dead end protein homolog 1 (371 aa).

RRM domains are found at residues 85–163 (PQDI…ALDG) and 165–245 (PGNF…KLRS).

The protein localises to the nucleus. It is found in the cytoplasm. In terms of biological role, RNA-binding factor that positively regulates gene expression by prohibiting miRNA-mediated gene suppression. Relieves miRNA repression in germline cells. Prohibits the function of several miRNAs by blocking the accessibility of target mRNAs. Sequence-specific RNA-binding factor that binds to U-rich regions (URRs) in the 3'untranslated region (3'-UTR) of several mRNAs. Does not bind to miRNAs. May play a role during early embryonic survival. The polypeptide is Dead end protein homolog 1 (dnd1) (Xenopus laevis (African clawed frog)).